A 283-amino-acid chain; its full sequence is Elongation factor Ts (283 aa).

Residues 80 to 83 (TDFV) are involved in Mg(2+) ion dislocation from EF-Tu.

This sequence belongs to the EF-Ts family.

The protein resides in the cytoplasm. Associates with the EF-Tu.GDP complex and induces the exchange of GDP to GTP. It remains bound to the aminoacyl-tRNA.EF-Tu.GTP complex up to the GTP hydrolysis stage on the ribosome. The protein is Elongation factor Ts of Cronobacter sakazakii (strain ATCC BAA-894) (Enterobacter sakazakii).